A 301-amino-acid polypeptide reads, in one-letter code: GTPase Era (301 aa).

The region spanning 4 to 173 is the Era-type G domain; it reads KAGFVALIGK…LECISQHLSP (170 aa). Residues 12-19 form a G1 region; that stretch reads GKPNAGKS. Position 12 to 19 (12 to 19) interacts with GTP; it reads GKPNAGKS. The segment at 38 to 42 is G2; sequence NATRK. The G3 stretch occupies residues 64–67; sequence DTPG. Residues 64–68 and 122–125 each bind GTP; these read DTPGL and SKID. Positions 122–125 are G4; it reads SKID. A G5 region spans residues 152–154; sequence LSA. One can recognise a KH type-2 domain in the interval 204 to 280; it reads LSDEIPYESD…FLNLQVIAQK (77 aa).

This sequence belongs to the TRAFAC class TrmE-Era-EngA-EngB-Septin-like GTPase superfamily. Era GTPase family. As to quaternary structure, monomer.

The protein localises to the cytoplasm. It is found in the cell inner membrane. Functionally, an essential GTPase that binds both GDP and GTP, with rapid nucleotide exchange. Plays a role in 16S rRNA processing and 30S ribosomal subunit biogenesis and possibly also in cell cycle regulation and energy metabolism. This is GTPase Era from Helicobacter pylori (strain ATCC 700392 / 26695) (Campylobacter pylori).